The sequence spans 392 residues: Trans-2-enoyl-CoA reductase [NADH] (392 aa).

NAD(+)-binding positions include 74–75 (FE), 111–112 (DA), and 141–142 (LA). Y227 contacts substrate. Residue Y237 is the Proton donor of the active site. NAD(+)-binding positions include K246 and 276-278 (VVT).

The protein belongs to the TER reductase family. In terms of assembly, monomer.

The enzyme catalyses a 2,3-saturated acyl-CoA + NAD(+) = a (2E)-enoyl-CoA + NADH + H(+). Its pathway is lipid metabolism; fatty acid biosynthesis. Its function is as follows. Involved in the fatty acid synthesis (FAS II). Catalyzes the reduction of a carbon-carbon double bond in an enoyl moiety that is covalently linked to a coenzyme A (CoA). In Brachyspira hyodysenteriae (strain ATCC 49526 / WA1), this protein is Trans-2-enoyl-CoA reductase [NADH].